The primary structure comprises 548 residues: Chaperonin GroEL (548 aa).

ATP is bound by residues 30 to 33 (TLGP), Lys51, 87 to 91 (DGTTT), Gly415, 479 to 481 (NAA), and Asp495.

The protein belongs to the chaperonin (HSP60) family. As to quaternary structure, forms a cylinder of 14 subunits composed of two heptameric rings stacked back-to-back. Interacts with the co-chaperonin GroES.

The protein localises to the cytoplasm. It carries out the reaction ATP + H2O + a folded polypeptide = ADP + phosphate + an unfolded polypeptide.. Functionally, together with its co-chaperonin GroES, plays an essential role in assisting protein folding. The GroEL-GroES system forms a nano-cage that allows encapsulation of the non-native substrate proteins and provides a physical environment optimized to promote and accelerate protein folding. In Salmonella gallinarum (strain 287/91 / NCTC 13346), this protein is Chaperonin GroEL.